A 1250-amino-acid chain; its full sequence is DNA-directed RNA polymerase subunit beta (1250 aa).

The interval 1215–1250 (QDLNDDDINPDDTIDAELDDNLFDDDFDDTFDDDDL) is disordered.

This sequence belongs to the RNA polymerase beta chain family. As to quaternary structure, the RNAP catalytic core consists of 2 alpha, 1 beta, 1 beta' and 1 omega subunit. When a sigma factor is associated with the core the holoenzyme is formed, which can initiate transcription.

The catalysed reaction is RNA(n) + a ribonucleoside 5'-triphosphate = RNA(n+1) + diphosphate. Functionally, DNA-dependent RNA polymerase catalyzes the transcription of DNA into RNA using the four ribonucleoside triphosphates as substrates. The sequence is that of DNA-directed RNA polymerase subunit beta from Acetivibrio thermocellus (strain ATCC 27405 / DSM 1237 / JCM 9322 / NBRC 103400 / NCIMB 10682 / NRRL B-4536 / VPI 7372) (Clostridium thermocellum).